The chain runs to 258 residues: Acyl-[acyl-carrier-protein]--UDP-N-acetylglucosamine O-acyltransferase (258 aa).

The protein belongs to the transferase hexapeptide repeat family. LpxA subfamily. As to quaternary structure, homotrimer.

The protein resides in the cytoplasm. It carries out the reaction a (3R)-hydroxyacyl-[ACP] + UDP-N-acetyl-alpha-D-glucosamine = a UDP-3-O-[(3R)-3-hydroxyacyl]-N-acetyl-alpha-D-glucosamine + holo-[ACP]. It functions in the pathway glycolipid biosynthesis; lipid IV(A) biosynthesis; lipid IV(A) from (3R)-3-hydroxytetradecanoyl-[acyl-carrier-protein] and UDP-N-acetyl-alpha-D-glucosamine: step 1/6. In terms of biological role, involved in the biosynthesis of lipid A, a phosphorylated glycolipid that anchors the lipopolysaccharide to the outer membrane of the cell. In Pseudomonas aeruginosa (strain LESB58), this protein is Acyl-[acyl-carrier-protein]--UDP-N-acetylglucosamine O-acyltransferase.